A 134-amino-acid polypeptide reads, in one-letter code: Profilin-3 (134 aa).

Cys13 and Cys118 are disulfide-bonded. The Involved in PIP2 interaction motif lies at 84 to 100 (AVIRGKKGSGGITIKKT). Thr114 bears the Phosphothreonine mark.

It belongs to the profilin family. Occurs in many kinds of cells as a complex with monomeric actin in a 1:1 ratio. In terms of processing, phosphorylated by MAP kinases.

The protein resides in the cytoplasm. It is found in the cytoskeleton. Functionally, binds to actin and affects the structure of the cytoskeleton. At high concentrations, profilin prevents the polymerization of actin, whereas it enhances it at low concentrations. The protein is Profilin-3 of Olea europaea (Common olive).